The chain runs to 204 residues: Small ribosomal subunit protein uS4 (204 aa).

The disordered stretch occupies residues 1–46; sequence MSKRHSSKYKIDRRMGENIWGRPKSPVNRREYGPGQHGQRRRSKIS. The S4 RNA-binding domain maps to 94–157; it reads RRLDMIVYRA…QEMALVLEAQ (64 aa).

This sequence belongs to the universal ribosomal protein uS4 family. In terms of assembly, part of the 30S ribosomal subunit. Contacts protein S5. The interaction surface between S4 and S5 is involved in control of translational fidelity.

Functionally, one of the primary rRNA binding proteins, it binds directly to 16S rRNA where it nucleates assembly of the body of the 30S subunit. Its function is as follows. With S5 and S12 plays an important role in translational accuracy. This is Small ribosomal subunit protein uS4 from Zymomonas mobilis subsp. mobilis (strain ATCC 31821 / ZM4 / CP4).